The primary structure comprises 396 residues: Peptide chain release factor 1, mitochondrial (396 aa).

Q268 carries the N5-methylglutamine modification. A disordered region spans residues 317 to 340 (LEKEEKERNARKDQVSTTDRSDKI).

Belongs to the prokaryotic/mitochondrial release factor family. In terms of processing, methylation of glutamine in the GGQ triplet is conserved from bacteria to mammals.

It localises to the mitochondrion. Functionally, mitochondrial peptide chain release factor that directs the termination of translation in response to the peptide chain termination codons UAA and UAG. This Kluyveromyces lactis (strain ATCC 8585 / CBS 2359 / DSM 70799 / NBRC 1267 / NRRL Y-1140 / WM37) (Yeast) protein is Peptide chain release factor 1, mitochondrial (MRF1).